Here is a 541-residue protein sequence, read N- to C-terminus: Zinc finger CCHC domain-containing protein 7 (541 aa).

The interval 111–144 is disordered; the sequence is AEEKTQSPATSHSNKVAQKCKRNNKKPKPEERPG. Polar residues predominate over residues 116 to 126; the sequence is QSPATSHSNKV. Glycyl lysine isopeptide (Lys-Gly) (interchain with G-Cter in SUMO2) cross-links involve residues lysine 129, lysine 136, lysine 138, lysine 234, and lysine 249. 3 CCHC-type zinc fingers span residues 236 to 253, 258 to 275, and 299 to 316; these read VTCRNCDKRGHLSKNCPL, RACCLCSERGHLQYGCPA, and KRCDRCDMIGHHADACPE. Lysine 334 is covalently cross-linked (Glycyl lysine isopeptide (Lys-Gly) (interchain with G-Cter in SUMO2)). The segment at 343-360 adopts a CCHC-type 4 zinc-finger fold; sequence VYCYNCAQKGHYGHECTE. Residues 394-541 form a disordered region; sequence VKDLKKNGDF…KKKKPKPSGL (148 aa). Glycyl lysine isopeptide (Lys-Gly) (interchain with G-Cter in SUMO2) cross-links involve residues lysine 408 and lysine 431. Basic residues predominate over residues 418–434; sequence RRHHDMRKSRSPRKYRR. Basic and acidic residues predominate over residues 435 to 452; sequence WPRENKETQKEKTRSREG. A Glycyl lysine isopeptide (Lys-Gly) (interchain with G-Cter in SUMO2) cross-link involves residue lysine 473. Polar residues predominate over residues 474–486; it reads PNASGCANNQKPS. Position 477 is a phosphoserine (serine 477). Residues lysine 484 and lysine 487 each participate in a glycyl lysine isopeptide (Lys-Gly) (interchain with G-Cter in SUMO2) cross-link. Basic residues predominate over residues 487–497; it reads KSLHHASHYHR. Composition is skewed to basic and acidic residues over residues 498–509 and 517–527; these read LREERLLRESKR and STEDGSHDDLF. Lysine 530 participates in a covalent cross-link: Glycyl lysine isopeptide (Lys-Gly) (interchain with G-Cter in SUMO2). A compositionally biased stretch (basic residues) spans 530 to 541; sequence KQKKKKPKPSGL.

As to quaternary structure, component of a nucleolar TRAMP-like complex, an ATP-dependent exosome regulatory complex consisting of a helicase (MTREX), an oligadenylate polymerase (TENT4B or TENT4A), and a substrate specific RNA-binding factor (ZCCHC7 or ZCCHC8). Several TRAMP-like complexes exist with specific compositions and are associated with nuclear, or nucleolar RNA exosomes.

It is found in the nucleus. Its subcellular location is the nucleolus. This Mus musculus (Mouse) protein is Zinc finger CCHC domain-containing protein 7 (Zcchc7).